Consider the following 465-residue polypeptide: Probable Xaa-Pro aminopeptidase PEPP (465 aa).

Positions 259, 270, 395, and 435 each coordinate Mn(2+).

The protein belongs to the peptidase M24B family. Mn(2+) serves as cofactor.

It carries out the reaction Release of any N-terminal amino acid, including proline, that is linked to proline, even from a dipeptide or tripeptide.. Its function is as follows. Catalyzes the removal of a penultimate prolyl residue from the N-termini of peptides. The sequence is that of Probable Xaa-Pro aminopeptidase PEPP (PEPP) from Pyricularia oryzae (strain 70-15 / ATCC MYA-4617 / FGSC 8958) (Rice blast fungus).